Reading from the N-terminus, the 162-residue chain is Phosphopantetheine adenylyltransferase (162 aa).

Residue T10 coordinates substrate. Residues 10 to 11 and H18 each bind ATP; that span reads TF. The substrate site is built by K42, L74, and R88. ATP contacts are provided by residues 89 to 91, E99, and 124 to 130; these read GLR and FSCISST.

It belongs to the bacterial CoaD family. Homohexamer. Requires Mg(2+) as cofactor.

It is found in the cytoplasm. It carries out the reaction (R)-4'-phosphopantetheine + ATP + H(+) = 3'-dephospho-CoA + diphosphate. It participates in cofactor biosynthesis; coenzyme A biosynthesis; CoA from (R)-pantothenate: step 4/5. Reversibly transfers an adenylyl group from ATP to 4'-phosphopantetheine, yielding dephospho-CoA (dPCoA) and pyrophosphate. The polypeptide is Phosphopantetheine adenylyltransferase (Francisella tularensis subsp. mediasiatica (strain FSC147)).